Here is a 379-residue protein sequence, read N- to C-terminus: 23S rRNA (uracil(747)-C(5))-methyltransferase RlmC (379 aa).

The [4Fe-4S] cluster site is built by C3, C11, C14, and C87. The S-adenosyl-L-methionine site is built by Q212, F241, E262, and N309. The active-site Nucleophile is C336.

This sequence belongs to the class I-like SAM-binding methyltransferase superfamily. RNA M5U methyltransferase family. RlmC subfamily.

The enzyme catalyses uridine(747) in 23S rRNA + S-adenosyl-L-methionine = 5-methyluridine(747) in 23S rRNA + S-adenosyl-L-homocysteine + H(+). Its function is as follows. Catalyzes the formation of 5-methyl-uridine at position 747 (m5U747) in 23S rRNA. This chain is 23S rRNA (uracil(747)-C(5))-methyltransferase RlmC, found in Shewanella loihica (strain ATCC BAA-1088 / PV-4).